The following is a 95-amino-acid chain: Aspartyl/glutamyl-tRNA(Asn/Gln) amidotransferase subunit C (95 aa).

Belongs to the GatC family. Heterotrimer of A, B and C subunits.

It carries out the reaction L-glutamyl-tRNA(Gln) + L-glutamine + ATP + H2O = L-glutaminyl-tRNA(Gln) + L-glutamate + ADP + phosphate + H(+). It catalyses the reaction L-aspartyl-tRNA(Asn) + L-glutamine + ATP + H2O = L-asparaginyl-tRNA(Asn) + L-glutamate + ADP + phosphate + 2 H(+). Functionally, allows the formation of correctly charged Asn-tRNA(Asn) or Gln-tRNA(Gln) through the transamidation of misacylated Asp-tRNA(Asn) or Glu-tRNA(Gln) in organisms which lack either or both of asparaginyl-tRNA or glutaminyl-tRNA synthetases. The reaction takes place in the presence of glutamine and ATP through an activated phospho-Asp-tRNA(Asn) or phospho-Glu-tRNA(Gln). The sequence is that of Aspartyl/glutamyl-tRNA(Asn/Gln) amidotransferase subunit C from Trichlorobacter lovleyi (strain ATCC BAA-1151 / DSM 17278 / SZ) (Geobacter lovleyi).